Here is a 377-residue protein sequence, read N- to C-terminus: Protein RecA (377 aa).

An ATP-binding site is contributed by Gly-65 to Thr-72. The disordered stretch occupies residues Gly-329–Lys-377. The segment covering Thr-339–Ala-361 has biased composition (basic and acidic residues).

This sequence belongs to the RecA family.

The protein resides in the cytoplasm. Functionally, can catalyze the hydrolysis of ATP in the presence of single-stranded DNA, the ATP-dependent uptake of single-stranded DNA by duplex DNA, and the ATP-dependent hybridization of homologous single-stranded DNAs. It interacts with LexA causing its activation and leading to its autocatalytic cleavage. This Levilactobacillus brevis (strain ATCC 367 / BCRC 12310 / CIP 105137 / JCM 1170 / LMG 11437 / NCIMB 947 / NCTC 947) (Lactobacillus brevis) protein is Protein RecA.